The primary structure comprises 244 residues: tRNA (guanine-N(1)-)-methyltransferase (244 aa).

Residues glycine 113 and 133-138 (IGDYVL) each bind S-adenosyl-L-methionine.

The protein belongs to the RNA methyltransferase TrmD family. As to quaternary structure, homodimer.

It is found in the cytoplasm. The catalysed reaction is guanosine(37) in tRNA + S-adenosyl-L-methionine = N(1)-methylguanosine(37) in tRNA + S-adenosyl-L-homocysteine + H(+). Functionally, specifically methylates guanosine-37 in various tRNAs. The protein is tRNA (guanine-N(1)-)-methyltransferase of Bacillus cereus (strain B4264).